Consider the following 3681-residue polypeptide: E3 ubiquitin-protein ligase UPL1 (3681 aa).

A compositionally biased stretch (basic and acidic residues) spans 882 to 891 (DEKKSVDRGS). The interval 882–912 (DEKKSVDRGSDNSVSASSSTAERESDEDSSN) is disordered. Low complexity predominate over residues 892 to 901 (DNSVSASSST). Residues 1269–1310 (QLDESIVGMIVEMGFSRSRAEIALRRVGTNSVEMAMDWLFTN) form the UBA domain. In terms of domain architecture, UIM spans 1316-1335 (QEDDELAQALALSLGNSSET). 10 disordered regions span residues 1332 to 1358 (SSET…KEPP), 1768 to 1802 (MEVD…KAEI), 2015 to 2094 (EQLK…MRIE), 2125 to 2151 (ENRA…EDAD), 2253 to 2287 (RQTG…TASV), 2401 to 2435 (NTTE…QSEE), 2483 to 2505 (PLPL…DGAP), 2537 to 2606 (IAPP…APEV), 2975 to 3003 (SPSS…DAES), and 3228 to 3254 (TAGE…KTDG). Basic and acidic residues-rich tracts occupy residues 1336–1345 (PKLEDTEKPV), 1782–1802 (KVGE…KAEI), and 2017–2037 (LKSE…HDSH). A compositionally biased stretch (polar residues) spans 2038 to 2087 (GNSTETEADELNQNNSSLQQVTDAAGNGQEQAQVSSQSAGERGSSQTQAM). Residues 2130–2151 (DDVDDDMGDEGEDDEGDDEDAD) are compositionally biased toward acidic residues. Basic and acidic residues predominate over residues 2253–2265 (RQTGRSSLDRSGS). Residues 2277 to 2287 (RPSQTGNTASV) are compositionally biased toward polar residues. S2598 carries the phosphoserine modification. The span at 2982-3002 (EKLENKPVGEEASSETRKDAE) shows a compositional bias: basic and acidic residues. Over residues 3237–3247 (AHGSSSKTSVD) the composition is skewed to polar residues. An HECT domain is found at 3340 to 3681 (SPQDLKGRLN…HEASEGFGFA (342 aa)). Catalysis depends on C3648, which acts as the Glycyl thioester intermediate.

It belongs to the UPL family. TOM1/PTR1 subfamily. As to expression, widely expressed. Expressed in root, stem, cauline and rosette leaf, seedling and flower (at protein level).

It catalyses the reaction S-ubiquitinyl-[E2 ubiquitin-conjugating enzyme]-L-cysteine + [acceptor protein]-L-lysine = [E2 ubiquitin-conjugating enzyme]-L-cysteine + N(6)-ubiquitinyl-[acceptor protein]-L-lysine.. Its pathway is protein modification; protein ubiquitination. Probable E3 ubiquitin-protein ligase which mediates ubiquitination and subsequent proteasomal degradation of target proteins. This Arabidopsis thaliana (Mouse-ear cress) protein is E3 ubiquitin-protein ligase UPL1 (UPL1).